Reading from the N-terminus, the 426-residue chain is Glutamate-1-semialdehyde 2,1-aminomutase (426 aa).

An N6-(pyridoxal phosphate)lysine modification is found at Lys265.

This sequence belongs to the class-III pyridoxal-phosphate-dependent aminotransferase family. HemL subfamily. In terms of assembly, homodimer. Pyridoxal 5'-phosphate serves as cofactor.

The protein resides in the cytoplasm. The enzyme catalyses (S)-4-amino-5-oxopentanoate = 5-aminolevulinate. The protein operates within porphyrin-containing compound metabolism; protoporphyrin-IX biosynthesis; 5-aminolevulinate from L-glutamyl-tRNA(Glu): step 2/2. The chain is Glutamate-1-semialdehyde 2,1-aminomutase from Actinobacillus pleuropneumoniae serotype 3 (strain JL03).